A 78-amino-acid polypeptide reads, in one-letter code: Exodeoxyribonuclease 7 small subunit (78 aa).

It belongs to the XseB family. In terms of assembly, heterooligomer composed of large and small subunits.

The protein localises to the cytoplasm. It carries out the reaction Exonucleolytic cleavage in either 5'- to 3'- or 3'- to 5'-direction to yield nucleoside 5'-phosphates.. Its function is as follows. Bidirectionally degrades single-stranded DNA into large acid-insoluble oligonucleotides, which are then degraded further into small acid-soluble oligonucleotides. This is Exodeoxyribonuclease 7 small subunit from Pediococcus pentosaceus (strain ATCC 25745 / CCUG 21536 / LMG 10740 / 183-1w).